Consider the following 201-residue polypeptide: Urease accessory protein UreG (201 aa).

Residue 12-19 (GPVGSGKT) coordinates GTP.

Belongs to the SIMIBI class G3E GTPase family. UreG subfamily. Homodimer. UreD, UreF and UreG form a complex that acts as a GTP-hydrolysis-dependent molecular chaperone, activating the urease apoprotein by helping to assemble the nickel containing metallocenter of UreC. The UreE protein probably delivers the nickel.

Its subcellular location is the cytoplasm. Functionally, facilitates the functional incorporation of the urease nickel metallocenter. This process requires GTP hydrolysis, probably effectuated by UreG. The sequence is that of Urease accessory protein UreG from Dechloromonas aromatica (strain RCB).